The primary structure comprises 497 residues: Probable polyamine oxidase 4 (497 aa).

FAD is bound by residues Glu58, Arg66, Val247, and Glu435. Positions 495–497 (SRM) match the Microbody targeting signal motif.

It belongs to the flavin monoamine oxidase family. It depends on FAD as a cofactor. As to expression, highly expressed in roots, flowers and greening cotelydons. Lower expression in other tissues.

Its subcellular location is the peroxisome. It catalyses the reaction spermine + O2 + H2O = 3-aminopropanal + spermidine + H2O2. The catalysed reaction is spermidine + O2 + H2O = 3-aminopropanal + putrescine + H2O2. The protein operates within amine and polyamine degradation; spermine degradation. Its pathway is amine and polyamine degradation; spermidine degradation. Functionally, flavoenzyme involved in polyamine back-conversion. Catalyzes the oxidation of the secondary amino group of polyamines, such as spermine and spermidine. Substrate preference is spermine &gt; spermidine. No activity detected when putrescine or N(1)-acetylspermine are used as substrates. Plays an important role in the regulation of polyamine intracellular concentration. This Arabidopsis thaliana (Mouse-ear cress) protein is Probable polyamine oxidase 4 (PAO4).